A 358-amino-acid polypeptide reads, in one-letter code: Pyruvate dehydrogenase E1 component subunit alpha (358 aa).

As to quaternary structure, heterodimer of an alpha and a beta chain. It depends on thiamine diphosphate as a cofactor.

It carries out the reaction N(6)-[(R)-lipoyl]-L-lysyl-[protein] + pyruvate + H(+) = N(6)-[(R)-S(8)-acetyldihydrolipoyl]-L-lysyl-[protein] + CO2. The pyruvate dehydrogenase complex catalyzes the overall conversion of pyruvate to acetyl-CoA and CO(2). It contains multiple copies of three enzymatic components: pyruvate dehydrogenase (E1), dihydrolipoamide acetyltransferase (E2) and lipoamide dehydrogenase (E3). This Mycoplasma pneumoniae (strain ATCC 29342 / M129 / Subtype 1) (Mycoplasmoides pneumoniae) protein is Pyruvate dehydrogenase E1 component subunit alpha (pdhA).